The chain runs to 107 residues: Phosphoribosyl-ATP pyrophosphatase 1 (107 aa).

It belongs to the PRA-PH family.

It is found in the cytoplasm. The enzyme catalyses 1-(5-phospho-beta-D-ribosyl)-ATP + H2O = 1-(5-phospho-beta-D-ribosyl)-5'-AMP + diphosphate + H(+). It functions in the pathway amino-acid biosynthesis; L-histidine biosynthesis; L-histidine from 5-phospho-alpha-D-ribose 1-diphosphate: step 2/9. The chain is Phosphoribosyl-ATP pyrophosphatase 1 (hisE1) from Rhodopseudomonas palustris (strain ATCC BAA-98 / CGA009).